Consider the following 318-residue polypeptide: Aspartate carbamoyltransferase catalytic subunit (318 aa).

Carbamoyl phosphate is bound by residues R64 and T65. Position 92 (K92) interacts with L-aspartate. Residues R114, H142, and Q145 each coordinate carbamoyl phosphate. L-aspartate-binding residues include R176 and R230. Residues G271 and P272 each coordinate carbamoyl phosphate.

It belongs to the aspartate/ornithine carbamoyltransferase superfamily. ATCase family. Heterododecamer (2C3:3R2) of six catalytic PyrB chains organized as two trimers (C3), and six regulatory PyrI chains organized as three dimers (R2).

The enzyme catalyses carbamoyl phosphate + L-aspartate = N-carbamoyl-L-aspartate + phosphate + H(+). It participates in pyrimidine metabolism; UMP biosynthesis via de novo pathway; (S)-dihydroorotate from bicarbonate: step 2/3. Catalyzes the condensation of carbamoyl phosphate and aspartate to form carbamoyl aspartate and inorganic phosphate, the committed step in the de novo pyrimidine nucleotide biosynthesis pathway. This is Aspartate carbamoyltransferase catalytic subunit from Desulfovibrio desulfuricans (strain ATCC 27774 / DSM 6949 / MB).